The sequence spans 1481 residues: Cystic fibrosis transmembrane conductance regulator (1481 aa).

The Cytoplasmic portion of the chain corresponds to 1–77 (MQRSPLEKAS…KLINALRRCF (77 aa)). The chain crosses the membrane as a helical span at residues 78–98 (FWRFMFYGIILYLGEVTKAVQ). The 285-residue stretch at 81 to 365 (FMFYGIILYL…WAVQTWYDSL (285 aa)) folds into the ABC transmembrane type-1 1 domain. The Extracellular segment spans residues 99–122 (PLLLGRIIASYDPDNKAERSIAIY). The helical transmembrane segment at 123 to 146 (LGIGLCLLFIVRTLLLHPAIFGLH) threads the bilayer. At 147-195 (HIGMQMRIAMFSLIYKKTLKLSSRVLDKISIGQLVSLLSNNLNKFDEGL) the chain is on the cytoplasmic side. The chain crosses the membrane as a helical span at residues 196–216 (ALAHFVWIAPLQVTLLMGLLW). Residues 217-222 (ELLQAF) lie on the Extracellular side of the membrane. The chain crosses the membrane as a helical span at residues 223 to 243 (TFCGLAFLVVLAFLQAGLGKM). At 244–298 (MMKYRDQRAGKINERLVITSEIIENIQSVKAYCWEEAMEKIIENLRQTELKLTRK) the chain is on the cytoplasmic side. Residues 299–319 (AAYVRYLNSSAFFFSGFFVVF) traverse the membrane as a helical segment. Topologically, residues 320–339 (LSVLPYALLKGIILRKIFTT) are extracellular. A helical membrane pass occupies residues 340–358 (ISFCIVLRMAVTRQFPWAV). Over 359–858 (QTWYDSLGAI…YLRYITVHKS (500 aa)) the chain is Cytoplasmic. ATP is bound by residues W401, 457 to 464 (GSTGAGKT), and Q492. The ABC transporter 1 domain maps to 423-645 (NGDNNLFFSN…RPDFSSKLMG (223 aa)). C523 carries S-palmitoyl cysteine lipidation. Residues S548 and S659 each carry the phosphoserine modification. The tract at residues 653–831 (TAERRNSIIT…EEINEEDLRD (179 aa)) is disordered R region. S669 carries the post-translational modification Phosphoserine; by PKA. S685 carries the post-translational modification Phosphoserine. K687 participates in a covalent cross-link: Glycyl lysine isopeptide (Lys-Gly) (interchain with G-Cter in ubiquitin). Phosphoserine occurs at positions 699 and 711. The residue at position 716 (T716) is a Phosphothreonine. A phosphoserine mark is found at S736, S767, S790, S795, and S813. A helical membrane pass occupies residues 859–879 (LMFVLIWCLVVFLAEVAASLV). Positions 859 to 1155 (LMFVLIWCLV…AVNSSIDVDS (297 aa)) constitute an ABC transmembrane type-1 2 domain. Residues 880–918 (VLCLFPKILFQDKGNSTKSANNSYAVIITSTSSYYIFYI) are Extracellular-facing. N-linked (GlcNAc...) asparagine glycosylation is found at N894 and N900. The discontinuously helical transmembrane segment at 919-939 (YVGVADTLLALGLFRGLPLVH) threads the bilayer. At 940 to 990 (TLITVSKTLHHKMLQSVLQAPMSTLNTLKTGGILNRFSKDIAVLDDLLPLT) the chain is on the cytoplasmic side. The helical transmembrane segment at 991 to 1011 (IFDFVQLLLIVIGAVVVVSVL) threads the bilayer. At 1012 to 1013 (QP) the chain is on the extracellular side. The helical transmembrane segment at 1014–1034 (YIFLATVPVIAAFILLRAYFL) threads the bilayer. Topologically, residues 1035–1095 (HTSQQLKQLE…TANWFLYLST (61 aa)) are cytoplasmic. Residues 1096–1116 (LRWFQMRIEMIFVIFFIAVTF) traverse the membrane as a helical segment. Over 1117-1130 (ISILTTGEGEGRVG) the chain is Extracellular. Residues 1131–1151 (IILTLAMNIMGTLQWAVNSSI) form a helical membrane-spanning segment. The Cytoplasmic segment spans residues 1152-1481 (DVDSLMRSVS…TEEEVQETKI (330 aa)). The ABC transporter 2 domain maps to 1211–1444 (MTVKDLTAKY…KSLFRQAISP (234 aa)). ATP-binding positions include Y1220 and 1245–1252 (GRTGSGKS). Residues 1387 to 1481 (RTLKQAFADC…TEEEVQETKI (95 aa)) form an interaction with GORASP2 region. C1396 carries the S-palmitoyl cysteine lipid modification. Residues 1452–1481 (PQRNSSRQKSRSNIAALKEETEEEVQETKI) are disordered. Low complexity predominate over residues 1453 to 1464 (QRNSSRQKSRSN). Residue S1457 is modified to Phosphoserine. The segment covering 1471–1481 (ETEEEVQETKI) has biased composition (acidic residues). The short motif at 1479 to 1481 (TKI) is the PDZ-binding element.

It belongs to the ABC transporter superfamily. ABCC family. CFTR transporter (TC 3.A.1.202) subfamily. As to quaternary structure, monomer; does not require oligomerization for channel activity. May form oligomers in the membrane. Interacts with SLC26A3, SLC26A6 and NHERF1. Interacts with SHANK2. Interacts with MYO6. Interacts (via C-terminus) with GOPC (via PDZ domain); this promotes CFTR internalization and thereby decreases channel activity. Interacts with SLC4A7 through NHERF1. Found in a complex with MYO5B and RAB11A. Interacts with ANO1. Interacts with SLC26A8. Interacts with AHCYL1; the interaction increases CFTR activity. Interacts with CSE1L. The core-glycosylated form interacts with GORASP2 (via PDZ GRASP-type 1 domain) in respone to ER stress. Interacts with MARCHF2; the interaction leads to CFTR ubiqtuitination and degradation. Interacts with ADGRG2. Post-translationally, N-glycosylated. Phosphorylated; cAMP treatment promotes phosphorylation and activates the channel. Dephosphorylation decreases the ATPase activity (in vitro). Phosphorylation at PKA sites activates the channel. Phosphorylation at PKC sites enhances the response to phosphorylation by PKA. Phosphorylated by AMPK; this inhibits channel activity. In terms of processing, ubiquitinated, leading to its degradation in the lysosome. Deubiquitination by USP10 in early endosomes enhances its endocytic recycling to the cell membrane. Ubiquitinated by RNF185 during ER stress. Ubiquitinated by MARCHF2.

The protein localises to the apical cell membrane. The protein resides in the early endosome membrane. Its subcellular location is the cell membrane. It is found in the recycling endosome membrane. It localises to the endoplasmic reticulum membrane. The protein localises to the nucleus. It carries out the reaction ATP + H2O + closed Cl(-) channel = ADP + phosphate + open Cl(-) channel.. It catalyses the reaction chloride(in) = chloride(out). The enzyme catalyses hydrogencarbonate(in) = hydrogencarbonate(out). The catalysed reaction is ATP + H2O = ADP + phosphate + H(+). In terms of biological role, epithelial ion channel that plays an important role in the regulation of epithelial ion and water transport and fluid homeostasis. Mediates the transport of chloride ions across the cell membrane. Possesses an intrinsic ATPase activity and utilizes ATP to gate its channel; the passive flow of anions through the channel is gated by cycles of ATP binding and hydrolysis by the ATP-binding domains. The ion channel is also permeable to HCO(3)(-); selectivity depends on the extracellular chloride concentration. Exerts its function also by modulating the activity of other ion channels and transporters. Contributes to the regulation of the pH and the ion content of the epithelial fluid layer. Modulates the activity of the epithelial sodium channel (ENaC) complex, in part by regulating the cell surface expression of the ENaC complex. May regulate bicarbonate secretion and salvage in epithelial cells by regulating the transporter SLC4A7. Can inhibit the chloride channel activity of ANO1. Plays a role in the chloride and bicarbonate homeostasis during sperm epididymal maturation and capacitation. The protein is Cystic fibrosis transmembrane conductance regulator of Muntiacus reevesi (Reeves' muntjac).